The chain runs to 128 residues: uncharacterized protein (128 aa).

The 99-residue stretch at 18 to 116 folds into the HTH hxlR-type domain; that stretch reads CPVETTLDII…WGEKYKDRID (99 aa).

This is an uncharacterized protein from Bacillus subtilis (strain 168).